Consider the following 294-residue polypeptide: 4-hydroxybenzoate octaprenyltransferase (294 aa).

8 helical membrane-spanning segments follow: residues 20 to 42, 98 to 118, 120 to 140, 145 to 165, 175 to 195, 218 to 238, 242 to 262, and 274 to 294; these read LLRI…ALWL, WEAV…VVLF, NTLT…YPFM, HLPQ…AWAA, WLLF…YAMV, AIIA…GQRA, SFYY…QYLA, and FLNN…DLAF.

The protein belongs to the UbiA prenyltransferase family. Mg(2+) serves as cofactor.

It localises to the cell inner membrane. It catalyses the reaction all-trans-octaprenyl diphosphate + 4-hydroxybenzoate = 4-hydroxy-3-(all-trans-octaprenyl)benzoate + diphosphate. It functions in the pathway cofactor biosynthesis; ubiquinone biosynthesis. Functionally, catalyzes the prenylation of para-hydroxybenzoate (PHB) with an all-trans polyprenyl group. Mediates the second step in the final reaction sequence of ubiquinone-8 (UQ-8) biosynthesis, which is the condensation of the polyisoprenoid side chain with PHB, generating the first membrane-bound Q intermediate 3-octaprenyl-4-hydroxybenzoate. The polypeptide is 4-hydroxybenzoate octaprenyltransferase (Marinobacter nauticus (strain ATCC 700491 / DSM 11845 / VT8) (Marinobacter aquaeolei)).